Consider the following 43-residue polypeptide: AAPCFCSGKPGRGDLWILRGTCPGGYGYTSNCYKWPNICCYPH.

3 disulfides stabilise this stretch: C4-C39, C6-C32, and C22-C40.

Belongs to the sea anemone type 3 (BDS) potassium channel toxin family.

The protein resides in the secreted. The protein localises to the nematocyst. In terms of biological role, acts as a gating modifier on both Kv and Nav ion channels, and also acts on blood pressure. Voltage-dependently inhibits voltage-gated potassium channels Kv3 (Kv3.1/KCNC1, Kv3.2/KCNC2 and Kv3.4/KCNC4) and slows inactivation of the voltage-gated sodium channel Nav1.7/SCN9A. Inhibits all Kv3.1, Kv3.2 and Kv3.4 by about 50% when tested at a voltage of +40 mV (45%, 48% and 56%, respectively). May act by binding residues in voltage-sensing domains S3b and S4 of Kv3. On sodium channel, tests have been done on human Nav1.7/SCN9A (expressed in HEK293 cells) (EC(50)=3 nM) and rat SCG neurons that mostly carry Nav1.7 channels (EC(50)=300 nM). This toxin also reduces blood pressure. This chain is Delta/kappa-actitoxin-Avd4a, found in Anemonia sulcata (Mediterranean snakelocks sea anemone).